A 311-amino-acid chain; its full sequence is Lipoyl synthase (311 aa).

Residues Cys-47, Cys-52, Cys-58, Cys-73, Cys-77, Cys-80, and Ser-286 each contribute to the [4Fe-4S] cluster site. The Radical SAM core domain occupies 59-276 (WSRHTATYLA…RSVGESLGLF (218 aa)).

It belongs to the radical SAM superfamily. Lipoyl synthase family. Requires [4Fe-4S] cluster as cofactor.

The protein resides in the cytoplasm. It catalyses the reaction [[Fe-S] cluster scaffold protein carrying a second [4Fe-4S](2+) cluster] + N(6)-octanoyl-L-lysyl-[protein] + 2 oxidized [2Fe-2S]-[ferredoxin] + 2 S-adenosyl-L-methionine + 4 H(+) = [[Fe-S] cluster scaffold protein] + N(6)-[(R)-dihydrolipoyl]-L-lysyl-[protein] + 4 Fe(3+) + 2 hydrogen sulfide + 2 5'-deoxyadenosine + 2 L-methionine + 2 reduced [2Fe-2S]-[ferredoxin]. The protein operates within protein modification; protein lipoylation via endogenous pathway; protein N(6)-(lipoyl)lysine from octanoyl-[acyl-carrier-protein]: step 2/2. Catalyzes the radical-mediated insertion of two sulfur atoms into the C-6 and C-8 positions of the octanoyl moiety bound to the lipoyl domains of lipoate-dependent enzymes, thereby converting the octanoylated domains into lipoylated derivatives. In Chlamydia trachomatis serovar L2 (strain ATCC VR-902B / DSM 19102 / 434/Bu), this protein is Lipoyl synthase.